Here is a 442-residue protein sequence, read N- to C-terminus: tRNA modification GTPase MnmE (442 aa).

Residues R21, E79, and K118 each coordinate (6S)-5-formyl-5,6,7,8-tetrahydrofolate. Residues 214–367 (GFKIAIVGKP…LKEELQNYLN (154 aa)) form the TrmE-type G domain. Residue N224 coordinates K(+). GTP-binding positions include 224-229 (NVGKSS), 243-249 (SDIAGTT), and 268-271 (DTAG). S228 is a binding site for Mg(2+). The K(+) site is built by S243, I245, and T248. T249 contributes to the Mg(2+) binding site. K442 contacts (6S)-5-formyl-5,6,7,8-tetrahydrofolate.

It belongs to the TRAFAC class TrmE-Era-EngA-EngB-Septin-like GTPase superfamily. TrmE GTPase family. As to quaternary structure, homodimer. Heterotetramer of two MnmE and two MnmG subunits. Requires K(+) as cofactor.

The protein resides in the cytoplasm. Functionally, exhibits a very high intrinsic GTPase hydrolysis rate. Involved in the addition of a carboxymethylaminomethyl (cmnm) group at the wobble position (U34) of certain tRNAs, forming tRNA-cmnm(5)s(2)U34. The chain is tRNA modification GTPase MnmE from Campylobacter jejuni subsp. jejuni serotype O:23/36 (strain 81-176).